Consider the following 399-residue polypeptide: Dof zinc finger protein DOF5.1 (399 aa).

The Dof-type zinc-finger motif lies at 95–149 (LKCPRCDSTNTKFCYFNNYSLTQPRHFCKACRRYWTRGGALRSVPVGGGCRRNKR). Residues C97, C100, C122, and C125 each coordinate Zn(2+). The segment at 139-176 (PVGGGCRRNKRTKNSSGGGGGSTSSGNSKSQDSATSND) is disordered.

As to expression, expressed ubiquitously, especially in the vascular tissues, except in seeds, petals and anthers. Specific to the vascular tissues in young leaves, cotyledons and flower buds. The PEAR proteins (e.g. DOF2.4, DOF5.1, DOF3.2, DOF1.1, DOF5.6 and DOF5.3) form a short-range concentration gradient that peaks at protophloem sieve elements (PSE).

It is found in the nucleus. Its function is as follows. Transcription factor that binds specifically to a 5'-AA[AG]G-3' consensus core sequence. Binds to 5'-TAAAGT-3' motif in REV promoter to triggers its transcription, thus regulating adaxial-abaxial polarity and influencing leaf axial patterning in an auxin transport- and response-dependent manner (e.g. IAA6 and IAA19 genes expression). Probably involved in early processes for vascular development. The PEAR proteins (e.g. DOF2.4, DOF5.1, DOF3.2, DOF1.1, DOF5.6 and DOF5.3) activate gene expression that promotes radial growth of protophloem sieve elements. The chain is Dof zinc finger protein DOF5.1 from Arabidopsis thaliana (Mouse-ear cress).